The sequence spans 461 residues: Elongation factor 1-alpha, oocyte form (461 aa).

Position 2 is a n,N,N-trimethylglycine (glycine 2). The tr-type G domain occupies 5–242 (KIHINIVVIG…DCIIPPQRPT (238 aa)). The interval 14 to 21 (GHVDSGKS) is G1. Residue 14-21 (GHVDSGKS) participates in GTP binding. Positions 70-74 (GITID) are G2. Positions 91-94 (DAPG) are G3. GTP contacts are provided by residues 91-95 (DAPGH) and 153-156 (NKMD). Residues 153–156 (NKMD) form a G4 region. The G5 stretch occupies residues 194–196 (SGW). 5-glutamyl glycerylphosphorylethanolamine is present on residues glutamate 301 and glutamate 374.

Belongs to the TRAFAC class translation factor GTPase superfamily. Classic translation factor GTPase family. EF-Tu/EF-1A subfamily. As to expression, oocyte.

The protein localises to the cytoplasm. In terms of biological role, this protein promotes the GTP-dependent binding of aminoacyl-tRNA to the A-site of ribosomes during protein biosynthesis. The protein is Elongation factor 1-alpha, oocyte form (eef1ao) of Xenopus laevis (African clawed frog).